Consider the following 201-residue polypeptide: 3-isopropylmalate dehydratase small subunit (201 aa).

It belongs to the LeuD family. LeuD type 1 subfamily. Heterodimer of LeuC and LeuD.

It catalyses the reaction (2R,3S)-3-isopropylmalate = (2S)-2-isopropylmalate. The protein operates within amino-acid biosynthesis; L-leucine biosynthesis; L-leucine from 3-methyl-2-oxobutanoate: step 2/4. Functionally, catalyzes the isomerization between 2-isopropylmalate and 3-isopropylmalate, via the formation of 2-isopropylmaleate. This Micrococcus luteus (strain ATCC 4698 / DSM 20030 / JCM 1464 / CCM 169 / CCUG 5858 / IAM 1056 / NBRC 3333 / NCIMB 9278 / NCTC 2665 / VKM Ac-2230) (Micrococcus lysodeikticus) protein is 3-isopropylmalate dehydratase small subunit.